The primary structure comprises 689 residues: MAARTLGRGVGRLLGSLRGLSGQPARPPCGVSAPRRAASGPSGSAPAVAAAAAQPGSYPALSAQAAREPAAFWGPLARDTLVWDTPYHTVWDCDFSTGKIGWFLGGQLNVSVNCLDQHVRKSPESVALIWERDEPGTEVRITYRELLETTCRLANTLKRHGVHRGDRVAIYMPVSPLAVAAMLACARIGAVHTVIFAGFSAESLAGRINDAKCKVVITFNQGLRGGRVVELKKIVDEAVKHCPTVQHVLVAHRTDNKVHMGDLDVPLEQEMAKEDPVCAPESMGSEDMLFMLYTSGSTGMPKGIVHTQAGYLLYAALTHKLVFDHQPGDIFGCVADIGWITGHSYVVYGPLCNGATSVLFESTPVYPNAGRYWETVERLKINQFYGAPTAVRLLLKYGDAWVKKYDRSSLRTLGSVGEPINCEAWEWLHRVVGDSRCTLVDTWWQTETGGICIAPRPSEEGAEILPAMAMRPFFGIVPVLMDEKGSVVEGSNVSGALCISQAWPGMARTIYGDHQRFVDAYFKAYPGYYFTGDGAYRTEGGYYQITGRMDDVINISGHRLGTAEIEDAIADHPAVPESAVIGYPHDIKGEAAFAFIVVKDSAGDSDVVVQELKSMVATKIAKYAVPDEILVVKRLPKTRSGKVMRRLLRKIITSEAQELGDTTTLEDPSIIAEILSVYQKCKDKQAAAK.

A mitochondrion-targeting transit peptide spans 1–37 (MAARTLGRGVGRLLGSLRGLSGQPARPPCGVSAPRRA). The disordered stretch occupies residues 17 to 46 (LRGLSGQPARPPCGVSAPRRAASGPSGSAP). Over residues 32–46 (SAPRRAASGPSGSAP) the composition is skewed to low complexity. Residues 224–227 (RGGR) and Thr341 contribute to the CoA site. Lys396 carries the post-translational modification N6-acetyllysine. ATP is bound by residues 417–419 (GEP), 441–446 (DTWWQT), Asp533, and Arg548. Ser556 serves as a coordination point for CoA. Arg559 is an ATP binding site. Lys642 is subject to N6-acetyllysine.

It belongs to the ATP-dependent AMP-binding enzyme family. As to quaternary structure, interacts with SIRT3. In terms of processing, reversibly acetylated on Lys-642. The acetyl-CoA synthase activity is inhibited by acetylation and activated by deacetylation mediated by the deacetylase SIRT3.

It is found in the mitochondrion matrix. The enzyme catalyses acetate + ATP + CoA = acetyl-CoA + AMP + diphosphate. It catalyses the reaction propanoate + ATP + CoA = propanoyl-CoA + AMP + diphosphate. With respect to regulation, inhibited by acetylation at Lys-642 and activated by deacetylation mediated by the deacetylase SIRT3. Functionally, catalyzes the synthesis of acetyl-CoA from short-chain fatty acids. Acetate is the preferred substrate. Can also utilize propionate with a much lower affinity. Provides acetyl-CoA that is utilized mainly for oxidation under ketogenic conditions. Involved in thermogenesis under ketogenic conditions, using acetate as a vital fuel when carbohydrate availability is insufficient. This is Acetyl-coenzyme A synthetase 2-like, mitochondrial (ACSS1) from Homo sapiens (Human).